Consider the following 306-residue polypeptide: Protoheme IX farnesyltransferase (306 aa).

The next 8 membrane-spanning stretches (helical) occupy residues 31–50, 55–77, 104–124, 125–145, 168–188, 218–235, 238–258, and 286–306; these read VIEL…QGGW, LILG…NCYI, LVFA…ISNW, LAAA…TLWL, WAAV…IVFL, GRAA…ATLA, LLLI…LAGG, and ASIS…LLPF.

This sequence belongs to the UbiA prenyltransferase family. Protoheme IX farnesyltransferase subfamily.

The protein resides in the cell membrane. It carries out the reaction heme b + (2E,6E)-farnesyl diphosphate + H2O = Fe(II)-heme o + diphosphate. It functions in the pathway porphyrin-containing compound metabolism; heme O biosynthesis; heme O from protoheme: step 1/1. In terms of biological role, converts heme B (protoheme IX) to heme O by substitution of the vinyl group on carbon 2 of heme B porphyrin ring with a hydroxyethyl farnesyl side group. In Clavibacter sepedonicus (Clavibacter michiganensis subsp. sepedonicus), this protein is Protoheme IX farnesyltransferase.